The sequence spans 586 residues: Putative butyrophilin subfamily 2 member A3 (586 aa).

The signal sequence occupies residues 1–27; sequence MEPAAALHFSRPASLLLLLSLCALVSA. One can recognise an Ig-like V-type domain in the interval 28 to 139; that stretch reads QVTVVGPTDP…SCNEAILHLV (112 aa). Residues 28–246 lie on the Extracellular side of the membrane; it reads QVTVVGPTDP…SFMPSRSPCV (219 aa). N-linked (GlcNAc...) asparagine glycans are attached at residues Asn45, Asn112, Asn214, and Asn220. A disulfide bond links Cys50 and Cys123. A helical membrane pass occupies residues 247-267; sequence VILPVIMIILMIPIAICIYWI. Residues 268–586 lie on the Cytoplasmic side of the membrane; it reads NNLQKEKKDS…VPQLPARKKV (319 aa). The B30.2/SPRY domain maps to 281–474; it reads TFNLCLSLAG…ILICSAFTGA (194 aa).

This sequence belongs to the immunoglobulin superfamily. BTN/MOG family.

The protein localises to the membrane. The polypeptide is Putative butyrophilin subfamily 2 member A3 (BTN2A3P) (Homo sapiens (Human)).